Consider the following 342-residue polypeptide: Ferredoxin--NADP reductase (342 aa).

Residues Cys-17, Asp-36, Gln-44, Tyr-49, Val-89, Phe-124, Asp-289, and Thr-330 each contribute to the FAD site.

This sequence belongs to the ferredoxin--NADP reductase type 2 family. As to quaternary structure, homodimer. It depends on FAD as a cofactor.

It carries out the reaction 2 reduced [2Fe-2S]-[ferredoxin] + NADP(+) + H(+) = 2 oxidized [2Fe-2S]-[ferredoxin] + NADPH. This is Ferredoxin--NADP reductase from Bradyrhizobium sp. (strain BTAi1 / ATCC BAA-1182).